A 215-amino-acid polypeptide reads, in one-letter code: Deoxyribose-phosphate aldolase (215 aa).

The Proton donor/acceptor role is filled by Asp-89. Lys-153 acts as the Schiff-base intermediate with acetaldehyde in catalysis. Catalysis depends on Lys-182, which acts as the Proton donor/acceptor.

This sequence belongs to the DeoC/FbaB aldolase family. DeoC type 1 subfamily.

The protein resides in the cytoplasm. The catalysed reaction is 2-deoxy-D-ribose 5-phosphate = D-glyceraldehyde 3-phosphate + acetaldehyde. It functions in the pathway carbohydrate degradation; 2-deoxy-D-ribose 1-phosphate degradation; D-glyceraldehyde 3-phosphate and acetaldehyde from 2-deoxy-alpha-D-ribose 1-phosphate: step 2/2. Its function is as follows. Catalyzes a reversible aldol reaction between acetaldehyde and D-glyceraldehyde 3-phosphate to generate 2-deoxy-D-ribose 5-phosphate. The polypeptide is Deoxyribose-phosphate aldolase (Lactiplantibacillus plantarum (strain ATCC BAA-793 / NCIMB 8826 / WCFS1) (Lactobacillus plantarum)).